Here is a 35-residue protein sequence, read N- to C-terminus: Photosystem II reaction center protein T (35 aa).

A helical transmembrane segment spans residues 3–23 (ALVYTFLLVSTLGIIFFAIFF).

The protein belongs to the PsbT family. PSII is composed of 1 copy each of membrane proteins PsbA, PsbB, PsbC, PsbD, PsbE, PsbF, PsbH, PsbI, PsbJ, PsbK, PsbL, PsbM, PsbT, PsbY, PsbZ, Psb30/Ycf12, at least 3 peripheral proteins of the oxygen-evolving complex and a large number of cofactors. It forms dimeric complexes.

It localises to the plastid. The protein resides in the chloroplast thylakoid membrane. Functionally, found at the monomer-monomer interface of the photosystem II (PS II) dimer, plays a role in assembly and dimerization of PSII. PSII is a light-driven water plastoquinone oxidoreductase, using light energy to abstract electrons from H(2)O, generating a proton gradient subsequently used for ATP formation. This Ceratophyllum demersum (Rigid hornwort) protein is Photosystem II reaction center protein T.